A 288-amino-acid chain; its full sequence is Acetyl-coenzyme A carboxylase carboxyl transferase subunit beta (288 aa).

One can recognise a CoA carboxyltransferase N-terminal domain in the interval 34 to 288 (LFAKCPACKH…HLVAFHGGVS (255 aa)). The Zn(2+) site is built by Cys38, Cys41, Cys56, and Cys59. Residues 38–59 (CPACKHMIYQKDLGPAKICPTC) form a C4-type zinc finger.

This sequence belongs to the AccD/PCCB family. As to quaternary structure, acetyl-CoA carboxylase is a heterohexamer composed of biotin carboxyl carrier protein (AccB), biotin carboxylase (AccC) and two subunits each of ACCase subunit alpha (AccA) and ACCase subunit beta (AccD). It depends on Zn(2+) as a cofactor.

It is found in the cytoplasm. It catalyses the reaction N(6)-carboxybiotinyl-L-lysyl-[protein] + acetyl-CoA = N(6)-biotinyl-L-lysyl-[protein] + malonyl-CoA. It participates in lipid metabolism; malonyl-CoA biosynthesis; malonyl-CoA from acetyl-CoA: step 1/1. In terms of biological role, component of the acetyl coenzyme A carboxylase (ACC) complex. Biotin carboxylase (BC) catalyzes the carboxylation of biotin on its carrier protein (BCCP) and then the CO(2) group is transferred by the transcarboxylase to acetyl-CoA to form malonyl-CoA. The chain is Acetyl-coenzyme A carboxylase carboxyl transferase subunit beta from Streptococcus equi subsp. zooepidemicus (strain H70).